The sequence spans 34 residues: Delta-conotoxin AtVIA (34 aa).

A propeptide spanning residues 1–4 (LSKK) is cleaved from the precursor. At Q5 the chain carries Pyrrolidone carboxylic acid. 3 disulfide bridges follow: C6/C23, C13/C27, and C22/C31.

As to expression, expressed by the venom duct.

It localises to the secreted. Its function is as follows. Probable toxin from a worm-hunter cone snail. Shows an excitatory activity on a majority of mouse lumbar dorsal root ganglion (DRG) neurons. Very probably inhibits the inactivation of voltage-gated sodium channels (Nav). This Conus ateralbus (Cone snail) protein is Delta-conotoxin AtVIA.